A 1481-amino-acid polypeptide reads, in one-letter code: Cystic fibrosis transmembrane conductance regulator (1481 aa).

Residues 1 to 77 lie on the Cytoplasmic side of the membrane; sequence MQRSPLEKAS…KLINALRRCF (77 aa). A helical transmembrane segment spans residues 78–98; the sequence is FWRFMFYGILLYLGEVTKAVQ. In terms of domain architecture, ABC transmembrane type-1 1 spans 81 to 365; sequence FMFYGILLYL…WAVQTWYDSL (285 aa). The Extracellular portion of the chain corresponds to 99–122; the sequence is PLLLGRIIASYDPDNKEERSIAIY. Residues 123 to 146 form a helical membrane-spanning segment; sequence LGIGLCLLFIVRTLLLHPAIFGLH. The Cytoplasmic segment spans residues 147–195; it reads HIGMQMRIAMFSLIYKKTLKLSSRVLDKISIGQLVSLLSNNLNKFDEGL. Residues 196–216 form a helical membrane-spanning segment; it reads ALAHFVWIVPLQVALLMGLIW. Topologically, residues 217-222 are extracellular; sequence ELLQAS. A helical membrane pass occupies residues 223 to 243; sequence AFCGLGFLIVLALFQAGLGRM. Topologically, residues 244-298 are cytoplasmic; the sequence is MMKYRDQRAGKINERLVITSEMIENIQSVKAYCWEEAMEKMIENLRQTELKLTRK. A helical membrane pass occupies residues 299-319; the sequence is AAYVRYFNSSAFFFSGFFVVF. The Extracellular segment spans residues 320–339; sequence LSVLPYALIKGIVLRKIFTT. The helical transmembrane segment at 340–358 threads the bilayer; that stretch reads ISFCIVLRMAVTRQFPWAV. Topologically, residues 359-858 are cytoplasmic; the sequence is QTWYDSLGAI…YLRYITVHKS (500 aa). Residues W401, S434, 458–465, and Q493 each bind ATP; that span reads GSTGAGKT. Positions 423–646 constitute an ABC transporter 1 domain; it reads NDDDSLFFSN…RPDFSSKLMG (224 aa). The S-palmitoyl cysteine moiety is linked to residue C524. 2 positions are modified to phosphoserine: S549 and S660. A disordered R region region spans residues 654-831; sequence SAERRNSILT…EEINEEDLKE (178 aa). Phosphoserine; by PKA is present on S670. S686 is modified (phosphoserine). Residue K688 forms a Glycyl lysine isopeptide (Lys-Gly) (interchain with G-Cter in ubiquitin) linkage. Phosphoserine occurs at positions 700 and 712. At T717 the chain carries Phosphothreonine. S737, S753, S768, S790, S795, and S813 each carry phosphoserine. A helical transmembrane segment spans residues 859-879; that stretch reads LIFVLIWCLVIFLAEVAASLV. The region spanning 859–1155 is the ABC transmembrane type-1 2 domain; that stretch reads LIFVLIWCLV…AVNSSIDVDS (297 aa). Residues 880 to 918 lie on the Extracellular side of the membrane; that stretch reads VLWFLGNTPPQDKGNSTYSRNNSYAVIITRTSSYYVFYI. Residues N894 and N900 are each glycosylated (N-linked (GlcNAc...) asparagine). Residues 919 to 939 form a discontinuously helical membrane-spanning segment; it reads YVGVADTLLAMGFFRGLPLVH. Residues 940 to 990 are Cytoplasmic-facing; the sequence is TLITVSKILHHKMLHSVLQAPMSTLNTLKAGGILNRFSKDIAILDDLLPLT. The chain crosses the membrane as a helical span at residues 991–1011; it reads IFDFIQLLLIVIGAIAVVAVL. At 1012-1013 the chain is on the extracellular side; that stretch reads QP. Residues 1014–1034 form a helical membrane-spanning segment; that stretch reads YIFVATVPVIVAFIMLRAYFL. Topologically, residues 1035–1095 are cytoplasmic; sequence QTSQQLKQLE…TANWFLYLST (61 aa). Residues 1096-1116 form a helical membrane-spanning segment; that stretch reads LRWFQMRIEMIFVIFFIAVTF. The Extracellular portion of the chain corresponds to 1117 to 1130; that stretch reads ISILTTGEGEGTVG. A helical membrane pass occupies residues 1131–1151; the sequence is IILTLAMNIMSTLQWAVNSSI. Topologically, residues 1152-1481 are cytoplasmic; it reads DVDSLMRSVS…TEEEVQDTRL (330 aa). In terms of domain architecture, ABC transporter 2 spans 1211 to 1444; it reads MTVKDLTAKY…RSLFRQAISP (234 aa). ATP contacts are provided by residues Y1220 and 1245 to 1252; that span reads GRTGSGKS. The interval 1387 to 1481 is interaction with GORASP2; that stretch reads RTLKQAFADC…TEEEVQDTRL (95 aa). Residue C1396 is the site of S-palmitoyl cysteine attachment. Residues S1445 and S1457 each carry the phosphoserine modification. The tract at residues 1462 to 1481 is disordered; the sequence is QPQIAALKEETEEEVQDTRL. The segment covering 1471–1481 has biased composition (acidic residues); that stretch reads ETEEEVQDTRL. The short motif at 1479 to 1481 is the PDZ-binding element; it reads TRL.

It belongs to the ABC transporter superfamily. ABCC family. CFTR transporter (TC 3.A.1.202) subfamily. Monomer; does not require oligomerization for channel activity. May form oligomers in the membrane. Interacts with SLC26A3, SLC26A6 and NHERF1. Interacts with SHANK2. Interacts with MYO6. Interacts (via C-terminus) with GOPC (via PDZ domain); this promotes CFTR internalization and thereby decreases channel activity. Interacts with SLC4A7 through NHERF1. Found in a complex with MYO5B and RAB11A. Interacts with ANO1. Interacts with SLC26A8. Interacts with AHCYL1; the interaction increases CFTR activity. Interacts with CSE1L. The core-glycosylated form interacts with GORASP2 (via PDZ GRASP-type 1 domain) in respone to ER stress. Interacts with MARCHF2; the interaction leads to CFTR ubiqtuitination and degradation. Interacts with ADGRG2. In terms of processing, N-glycosylated. Phosphorylated; cAMP treatment promotes phosphorylation and activates the channel. Dephosphorylation decreases the ATPase activity (in vitro). Phosphorylation at PKA sites activates the channel. Phosphorylation at PKC sites enhances the response to phosphorylation by PKA. Phosphorylated by AMPK; this inhibits channel activity. Post-translationally, ubiquitinated, leading to its degradation in the lysosome. Deubiquitination by USP10 in early endosomes enhances its endocytic recycling to the cell membrane. Ubiquitinated by RNF185 during ER stress. Ubiquitinated by MARCHF2.

It localises to the apical cell membrane. The protein localises to the early endosome membrane. It is found in the cell membrane. The protein resides in the recycling endosome membrane. Its subcellular location is the endoplasmic reticulum membrane. It localises to the nucleus. The catalysed reaction is ATP + H2O + closed Cl(-) channel = ADP + phosphate + open Cl(-) channel.. The enzyme catalyses chloride(in) = chloride(out). It catalyses the reaction hydrogencarbonate(in) = hydrogencarbonate(out). It carries out the reaction ATP + H2O = ADP + phosphate + H(+). Functionally, epithelial ion channel that plays an important role in the regulation of epithelial ion and water transport and fluid homeostasis. Mediates the transport of chloride ions across the cell membrane. Possesses an intrinsic ATPase activity and utilizes ATP to gate its channel; the passive flow of anions through the channel is gated by cycles of ATP binding and hydrolysis by the ATP-binding domains. The ion channel is also permeable to HCO(3)(-); selectivity depends on the extracellular chloride concentration. Exerts its function also by modulating the activity of other ion channels and transporters. Contributes to the regulation of the pH and the ion content of the epithelial fluid layer. Modulates the activity of the epithelial sodium channel (ENaC) complex, in part by regulating the cell surface expression of the ENaC complex. May regulate bicarbonate secretion and salvage in epithelial cells by regulating the transporter SLC4A7. Can inhibit the chloride channel activity of ANO1. Plays a role in the chloride and bicarbonate homeostasis during sperm epididymal maturation and capacitation. This Chlorocebus aethiops (Green monkey) protein is Cystic fibrosis transmembrane conductance regulator.